Here is a 469-residue protein sequence, read N- to C-terminus: Serine hydroxymethyltransferase, cytosolic (469 aa).

At K248 the chain carries N6-(pyridoxal phosphate)lysine.

Belongs to the SHMT family. As to quaternary structure, homotetramer. Pyridoxal 5'-phosphate serves as cofactor.

It localises to the cytoplasm. The enzyme catalyses (6R)-5,10-methylene-5,6,7,8-tetrahydrofolate + glycine + H2O = (6S)-5,6,7,8-tetrahydrofolate + L-serine. The protein operates within one-carbon metabolism; tetrahydrofolate interconversion. Functionally, interconversion of serine and glycine. The polypeptide is Serine hydroxymethyltransferase, cytosolic (SHM2) (Candida glabrata (strain ATCC 2001 / BCRC 20586 / JCM 3761 / NBRC 0622 / NRRL Y-65 / CBS 138) (Yeast)).